The primary structure comprises 198 residues: Ribosome maturation factor RimP (198 aa).

Belongs to the RimP family.

It is found in the cytoplasm. In terms of biological role, required for maturation of 30S ribosomal subunits. This chain is Ribosome maturation factor RimP, found in Rhizobium etli (strain ATCC 51251 / DSM 11541 / JCM 21823 / NBRC 15573 / CFN 42).